A 1574-amino-acid chain; its full sequence is Centrosomal protein of 170 kDa protein B (1574 aa).

The FHA domain occupies I23–I73. 3 disordered regions span residues V121 to G258, D316 to Q395, and F409 to E578. 3 stretches are compositionally biased toward basic and acidic residues: residues R147–A157, S182–D197, and L325–V344. S360 carries the post-translational modification Phosphoserine. Residues A370 to E382 show a composition bias toward low complexity. At S421 the chain carries Phosphoserine. Residues P430–P446 are compositionally biased toward basic and acidic residues. The segment covering A452–S463 has biased composition (polar residues). Positions L465 to L474 are enriched in basic and acidic residues. A compositionally biased stretch (polar residues) spans G475 to F488. A phosphoserine mark is found at S478 and S490. Pro residues predominate over residues E518–L528. At S534 the chain carries Phosphoserine. A phosphothreonine mark is found at T540 and T541. A phosphoserine mark is found at S595, S617, S653, S709, S744, S746, S749, S751, S819, and S843. 6 disordered regions span residues P637 to L826, R839 to S882, S924 to G1300, A1333 to A1358, N1377 to T1407, and N1510 to A1535. The span at F857–P867 shows a compositional bias: polar residues. Phosphoserine is present on S947. Residues D950–S959 are compositionally biased toward polar residues. Phosphoserine occurs at positions 965 and 981. Positions A996–H1005 are enriched in basic and acidic residues. Positions R1084–L1102 are enriched in polar residues. The residue at position 1122 (S1122) is a Phosphoserine. The span at A1134–E1146 shows a compositional bias: low complexity. 2 positions are modified to phosphoserine: S1166 and S1186. A compositionally biased stretch (low complexity) spans A1199–A1213. Positions H1265–R1282 are enriched in polar residues. Residue T1289 is modified to Phosphothreonine. S1341 carries the post-translational modification Phosphoserine. Polar residues-rich tracts occupy residues P1344–A1358 and S1385–N1396. Position 1345 is a phosphothreonine (T1345). S1347 carries the post-translational modification Phosphoserine. Phosphoserine is present on residues S1530 and S1533.

It belongs to the CEP170 family.

Its subcellular location is the cytoplasm. The protein localises to the cytoskeleton. Plays a role in microtubule organization. The polypeptide is Centrosomal protein of 170 kDa protein B (Cep170b) (Mus musculus (Mouse)).